Consider the following 188-residue polypeptide: Peptidyl-tRNA hydrolase (188 aa).

A tRNA-binding site is contributed by tyrosine 15. Histidine 20 acts as the Proton acceptor in catalysis. Residues phenylalanine 66, asparagine 68, and asparagine 114 each contribute to the tRNA site.

This sequence belongs to the PTH family. As to quaternary structure, monomer.

It is found in the cytoplasm. The enzyme catalyses an N-acyl-L-alpha-aminoacyl-tRNA + H2O = an N-acyl-L-amino acid + a tRNA + H(+). In terms of biological role, hydrolyzes ribosome-free peptidyl-tRNAs (with 1 or more amino acids incorporated), which drop off the ribosome during protein synthesis, or as a result of ribosome stalling. Its function is as follows. Catalyzes the release of premature peptidyl moieties from peptidyl-tRNA molecules trapped in stalled 50S ribosomal subunits, and thus maintains levels of free tRNAs and 50S ribosomes. In Lactococcus lactis subsp. lactis (strain IL1403) (Streptococcus lactis), this protein is Peptidyl-tRNA hydrolase.